The following is a 130-amino-acid chain: MPKSVKKINLRKGKRRLPKGVIHIQASFNNTIVTVTDIRGQVVSWSSAGACGFKGTKKSTPFAAQTAAENAIRILIDQGMKQAEVMISGPGPGRDTALRAIRRSGIILSFVRDVTPMPHNGCRPPRKRRV.

The protein belongs to the universal ribosomal protein uS11 family. As to quaternary structure, part of the 30S ribosomal subunit.

It is found in the plastid. It localises to the chloroplast. The polypeptide is Small ribosomal subunit protein uS11c (Marchantia polymorpha (Common liverwort)).